The following is a 296-amino-acid chain: Protoheme IX farnesyltransferase (296 aa).

The next 9 helical transmembrane spans lie at 13-33 (IIFG…KGII), 35-55 (YPLF…GCVF), 84-104 (VTLI…YIAA), 107-127 (LAMW…SLYM), 132-152 (VYGT…GYCA), 162-182 (LILL…IAIF), 208-228 (ITLY…VGYA), 229-249 (GYKY…MALR), and 264-284 (FVFS…DFSV).

The protein belongs to the UbiA prenyltransferase family. Protoheme IX farnesyltransferase subfamily.

It is found in the cell inner membrane. The enzyme catalyses heme b + (2E,6E)-farnesyl diphosphate + H2O = Fe(II)-heme o + diphosphate. It participates in porphyrin-containing compound metabolism; heme O biosynthesis; heme O from protoheme: step 1/1. Converts heme B (protoheme IX) to heme O by substitution of the vinyl group on carbon 2 of heme B porphyrin ring with a hydroxyethyl farnesyl side group. The sequence is that of Protoheme IX farnesyltransferase from Edwardsiella ictaluri (strain 93-146).